The chain runs to 385 residues: tRNA N6-adenosine threonylcarbamoyltransferase (385 aa).

3 residues coordinate a divalent metal cation: H140, H144, and Y161. Substrate contacts are provided by residues Y161–G165, D193, G208, E212, and N314. Position 343 (D343) interacts with a divalent metal cation.

It belongs to the KAE1 / TsaD family. In terms of assembly, component of the EKC/KEOPS complex composed of at least BUD32, CGI121, GON7, KAE1 and PCC1; the whole complex dimerizes. A divalent metal cation serves as cofactor.

The protein resides in the cytoplasm. The protein localises to the nucleus. The enzyme catalyses L-threonylcarbamoyladenylate + adenosine(37) in tRNA = N(6)-L-threonylcarbamoyladenosine(37) in tRNA + AMP + H(+). In terms of biological role, component of the EKC/KEOPS complex that is required for the formation of a threonylcarbamoyl group on adenosine at position 37 (t(6)A37) in tRNAs that read codons beginning with adenine. The complex is probably involved in the transfer of the threonylcarbamoyl moiety of threonylcarbamoyl-AMP (TC-AMP) to the N6 group of A37. KAE1 likely plays a direct catalytic role in this reaction, but requires other protein(s) of the complex to fulfill this activity. The EKC/KEOPS complex also promotes both telomere uncapping and telomere elongation. The complex is required for efficient recruitment of transcriptional coactivators. The sequence is that of tRNA N6-adenosine threonylcarbamoyltransferase from Eremothecium gossypii (strain ATCC 10895 / CBS 109.51 / FGSC 9923 / NRRL Y-1056) (Yeast).